The primary structure comprises 456 residues: Alcohol acyltransferase 1 (456 aa).

Catalysis depends on proton acceptor residues histidine 166 and aspartate 382.

This sequence belongs to the plant acyltransferase family. In terms of tissue distribution, expressed in fruit.

The enzyme catalyses 3-(methylsulfanyl)propanoyl-CoA + butan-1-ol = butyl 3-(methylsulfanyl)propanoate + CoA. It catalyses the reaction ethanol + benzoyl-CoA = ethyl benzoate + CoA. The catalysed reaction is butan-1-ol + benzoyl-CoA = butyl benzoate + CoA. It carries out the reaction 2-(methylsulfanyl)acetyl-CoA + butan-1-ol = butyl 2-(methylsulfanyl)acetate + CoA. Its function is as follows. Involved in the biosynthesis of volatile esters which confer kiwifruit flavor. Alcohol acyl transferase that can use a wide range of alcohols as substrate to produce esters. Exhibits benzoyl-CoA:alcohol O-acyltransferase activity. This chain is Alcohol acyltransferase 1, found in Actinidia deliciosa (Kiwi).